A 174-amino-acid chain; its full sequence is Zinc finger AN1 domain-containing stress-associated protein 15 (174 aa).

Residues 1-61 (MAQESCDLNK…TPPAAAAAAS (61 aa)) form a disordered region. Residues 18-41 (PSSSSSPSPSPTTASPSPPTAQMT) show a composition bias toward low complexity. Positions 42-54 (EPPPPQSTPPTPP) are enriched in pro residues. The segment at 109–155 (VLFVNRCNVCRKRVGLTGFRCRCGELFCPRHRHSETHECSFDYKTAG) adopts an AN1-type zinc-finger fold. Residues Cys-115, Cys-118, Cys-129, Cys-131, Cys-136, His-139, His-145, and Cys-147 each coordinate Zn(2+).

In terms of biological role, may be involved in environmental stress response. The sequence is that of Zinc finger AN1 domain-containing stress-associated protein 15 (SAP15) from Oryza sativa subsp. japonica (Rice).